The chain runs to 224 residues: Polysialic acid transport ATP-binding protein KpsT (224 aa).

The 222-residue stretch at 2–223 folds into the ABC transporter domain; it reads IKIENLTKSY…EYKMYQDLDI (222 aa). 38-45 serves as a coordination point for ATP; it reads GRNGAGKS.

The protein belongs to the ABC transporter superfamily.

It localises to the cell inner membrane. Its function is as follows. Putative ATP-binding protein, and an energy coupling component for the transport of polysialic acid across the cytoplasmic membrane. This is Polysialic acid transport ATP-binding protein KpsT (kpsT) from Escherichia coli.